We begin with the raw amino-acid sequence, 25 residues long: Panurgine K (25 aa).

2 disulfide bridges follow: C8–C23 and C11–C19.

The protein localises to the target cell membrane. It localises to the secreted. Antimicrobial peptide active against Gram-positive bacteria M.luteus (MIC=1.6 uM) and B.subtilis (MIC=3.3 uM). Less active against Gram-negative bacteria E.coli (MIC=63.3 uM) and yeast C.albicans (MIC=24.2 uM). Not active against S.aureus and P.aeruginosa. Has no hemolytic activity against human erythrocytes. Probably acts by disrupting membranes of target cells. In Panurgus calcaratus (Solitary bee), this protein is Panurgine K.